A 170-amino-acid polypeptide reads, in one-letter code: Urease accessory protein UreE (170 aa).

A disordered region spans residues 134–170; sequence ESGAYGGGHHHHGDDGHHPLAPIPLRQKIHRPSDKAE.

Belongs to the UreE family.

Its subcellular location is the cytoplasm. In terms of biological role, involved in urease metallocenter assembly. Binds nickel. Probably functions as a nickel donor during metallocenter assembly. The chain is Urease accessory protein UreE from Janthinobacterium sp. (strain Marseille) (Minibacterium massiliensis).